A 343-amino-acid chain; its full sequence is Homeobox protein DBX1 (343 aa).

Disordered stretches follow at residues 56–100 (RSVP…TAFS) and 240–343 (KERE…ITVS). Positions 181–240 (GMLRRAVFSDVQRKALEKMFQKQKYISKPDRKKLAAKLGLKDSQVKIWFQNRRMKWRNSK) form a DNA-binding region, homeobox. Positions 314 to 323 (AHSSSPGKPS) are enriched in low complexity. A compositionally biased stretch (acidic residues) spans 326-343 (SDSEEEEEGEEQEEITVS).

This sequence belongs to the H2.0 homeobox family.

It is found in the nucleus. Its function is as follows. Could have a role in patterning the central nervous system during embryogenesis. Has a key role in regulating the distinct phenotypic features that distinguish two major classes of ventral interneurons, V0 and V1 neurons. Regulates the transcription factor profile, neurotransmitter phenotype, intraspinal migratory path and axonal trajectory of V0 neurons, features that differentiate them from an adjacent set of V1 neurons. In Homo sapiens (Human), this protein is Homeobox protein DBX1 (DBX1).